The chain runs to 157 residues: Glutaredoxin-2, mitochondrial (157 aa).

The transit peptide at 1 to 18 (MYWRRAALVGTRLIPVRS) directs the protein to the mitochondrion. The residue at position 20 (Ser-20) is a Phosphoserine. In terms of domain architecture, Glutaredoxin spans 51 to 151 (VNQIQETISN…PLVHQCHLKN (101 aa)). Residue Cys-62 coordinates [2Fe-2S] cluster. Lys-68 serves as a coordination point for glutathione. Residue Cys-71 is modified to S-glutathionyl cysteine; alternate. A disulfide bond links Cys-71 and Cys-74. Glutathione contacts are provided by Gln-103 and Val-115. Cys-147 contributes to the [2Fe-2S] cluster binding site.

It belongs to the glutaredoxin family. Monomer; active form. Homodimer; inactive form. The homodimer is probably linked by 1 2Fe-2S cluster.

It localises to the mitochondrion. Its activity is regulated as follows. The 2Fe-2S present in the homodimer leads to inactivation of the enzyme. The 2Fe-2S may serve as a redox sensor: the presence of one-electron oxidants or reductants leading to the loss of the 2Fe-2S cluster, subsequent monomerization and activation of the enzyme. Its function is as follows. Glutathione-dependent oxidoreductase that facilitates the maintenance of mitochondrial redox homeostasis upon induction of apoptosis by oxidative stress. Involved in response to hydrogen peroxide and regulation of apoptosis caused by oxidative stress. Acts as a very efficient catalyst of monothiol reactions because of its high affinity for protein glutathione-mixed disulfides. Can receive electrons not only from glutathione (GSH), but also from thioredoxin reductase supporting both monothiol and dithiol reactions. Efficiently catalyzes both glutathionylation and deglutathionylation of mitochondrial complex I, which in turn regulates the superoxide production by the complex. Overexpression decreases the susceptibility to apoptosis and prevents loss of cardiolipin and cytochrome c release. In Bos taurus (Bovine), this protein is Glutaredoxin-2, mitochondrial (GLRX2).